Reading from the N-terminus, the 526-residue chain is Peptide chain release factor 3 (526 aa).

In terms of domain architecture, tr-type G spans 8-277; sequence SKRRTFAIIS…GLTRWAPAPQ (270 aa). Residues 17-24, 85-89, and 139-142 contribute to the GTP site; these read SHPDAGKT, DTPGH, and NKLD.

Belongs to the TRAFAC class translation factor GTPase superfamily. Classic translation factor GTPase family. PrfC subfamily.

The protein resides in the cytoplasm. Its function is as follows. Increases the formation of ribosomal termination complexes and stimulates activities of RF-1 and RF-2. It binds guanine nucleotides and has strong preference for UGA stop codons. It may interact directly with the ribosome. The stimulation of RF-1 and RF-2 is significantly reduced by GTP and GDP, but not by GMP. The protein is Peptide chain release factor 3 of Vibrio atlanticus (strain LGP32) (Vibrio splendidus (strain Mel32)).